Consider the following 249-residue polypeptide: MAAAALEPWSAVAPRRRKRAAGRRPRPGEGPRAEPEADGEAVLRRLREAEEDLRISDFCSSALETITECLRKQLEQLQPLTEALGRLHLGSSLPSASQEPLASSASHVKCVCYGLGTFASCPTARIQLAFMLLFLEKCQVPRSHCWVYDPLFSQTEVSVLTSLGVTVLSENEEGKRSVQGQPTVFYMPHCGTALYNNLLWSNWSADALSRVLIIGNSFRGLEERLLARILQENYPYIAKVSDRIAGPGF.

Residues 1 to 40 are disordered; that stretch reads MAAAALEPWSAVAPRRRKRAAGRRPRPGEGPRAEPEADGE. The segment covering 14 to 25 has biased composition (basic residues); the sequence is PRRRKRAAGRRP. A compositionally biased stretch (basic and acidic residues) spans 26–40; sequence RPGEGPRAEPEADGE.

Belongs to the SRR1 family.

Its subcellular location is the cytoplasm. Its function is as follows. Plays a role in the regulation of heme biosynthesis and in the regulation of the expression of core clock genes. The sequence is that of SRR1-like protein (Srrd) from Mus musculus (Mouse).